The primary structure comprises 422 residues: Ubiquitin-conjugating enzyme E2 Q1 (422 aa).

N-acetylmethionine is present on M1. The span at 1-24 shows a compositional bias: low complexity; the sequence is MQQPQPQGQQQPGPGQQLGVQGAA. 2 disordered regions span residues 1-40 and 173-221; these read MQQP…PGPC and QPLP…EDDG. A compositionally biased stretch (gly residues) spans 25–35; that stretch reads PGAGGGPGGGP. A compositionally biased stretch (acidic residues) spans 185 to 200; that stretch reads VSSEDEDEEMPEDTED. The span at 212 to 221 shows a compositional bias: basic and acidic residues; it reads AEGKKSEDDG. The UBC core domain maps to 251 to 415; it reads QATDRLMKEL…VQIHEKNGWY (165 aa). C351 serves as the catalytic Glycyl thioester intermediate.

The protein belongs to the ubiquitin-conjugating enzyme family. In terms of assembly, monomer and homodimer. Only the homodimer is linked to ubiquitin through thiolester activation. Interacts (via N-terminus) with B4GALT1 (via N-terminal cytoplasmic domain); the interaction is direct. Autoubiquitinated in vitro in the presence of NEDD4L. As to expression, expressed in liver, brain, heart, spleen, lung, kidney, muscle, ovary, epididymis, testis and placenta. Also expressed in thymus and ES cells. Only expressed in the uterus during pregnancy. Expressed in oocytes and during subsequent embryonic development stages (4-cell stage, blastocyst, 8.5 dpc, 13.5 dpc, 16.5 dpc and 18.5 dpc).

The protein resides in the nucleus. Its subcellular location is the cell projection. It localises to the filopodium. The protein localises to the cytoplasm. It is found in the cytosol. It carries out the reaction S-ubiquitinyl-[E1 ubiquitin-activating enzyme]-L-cysteine + [E2 ubiquitin-conjugating enzyme]-L-cysteine = [E1 ubiquitin-activating enzyme]-L-cysteine + S-ubiquitinyl-[E2 ubiquitin-conjugating enzyme]-L-cysteine.. It functions in the pathway protein modification; protein ubiquitination. Its function is as follows. Catalyzes the covalent attachment of ubiquitin to other proteins. Involved in female fertility and embryo implantation. May be involved in hormonal homeostasis in females. Involved in regulation of B4GALT1 cell surface expression, B4GALT1-mediated cell adhesion to laminin and embryoid body formation. The sequence is that of Ubiquitin-conjugating enzyme E2 Q1 (Ube2q1) from Mus musculus (Mouse).